A 264-amino-acid polypeptide reads, in one-letter code: Thiazole synthase (264 aa).

Lys-106 functions as the Schiff-base intermediate with DXP in the catalytic mechanism. 1-deoxy-D-xylulose 5-phosphate contacts are provided by residues Gly-167, 193-194 (AG), and 215-216 (NS).

This sequence belongs to the ThiG family. Homotetramer. Forms heterodimers with either ThiH or ThiS.

The protein resides in the cytoplasm. The catalysed reaction is [ThiS sulfur-carrier protein]-C-terminal-Gly-aminoethanethioate + 2-iminoacetate + 1-deoxy-D-xylulose 5-phosphate = [ThiS sulfur-carrier protein]-C-terminal Gly-Gly + 2-[(2R,5Z)-2-carboxy-4-methylthiazol-5(2H)-ylidene]ethyl phosphate + 2 H2O + H(+). It participates in cofactor biosynthesis; thiamine diphosphate biosynthesis. Functionally, catalyzes the rearrangement of 1-deoxy-D-xylulose 5-phosphate (DXP) to produce the thiazole phosphate moiety of thiamine. Sulfur is provided by the thiocarboxylate moiety of the carrier protein ThiS. In vitro, sulfur can be provided by H(2)S. The chain is Thiazole synthase from Pseudomonas putida (strain W619).